The following is an 834-amino-acid chain: Protein SEY1 (834 aa).

The disordered stretch occupies residues 1–26 (MSNVPSPTVTLEGDSPDAAHEAVSSS). Residues 1 to 733 (MSNVPSPTVT…KRSIMQHVTQ (733 aa)) are Cytoplasmic-facing. A GB1/RHD3-type G domain is found at 63-296 (PGDYRIISVF…SESFLFKPNY (234 aa)). Residue 73–80 (GSQSTGKS) coordinates GTP. The stretch at 659–688 (VRDKKLKRQYETVREEKEAEEEDEDEWDSE) forms a coiled coil. Residues 670–689 (TVREEKEAEEEDEDEWDSED) form a disordered region. Residues 676-689 (EAEEEDEDEWDSED) show a composition bias toward acidic residues. Residues 734–754 (IPYYIYIVILVLGWNEFMAIL) traverse the membrane as a helical segment. The Lumenal portion of the chain corresponds to 755–757 (RNP). A helical membrane pass occupies residues 758–778 (FFFTLLIMLAGATYVMYSMNL). Topologically, residues 779–834 (LGPASIVVQRMANEALGLAKEKLREFVVDDHMQHGHNMKKMTTNDIELDDLSEEST) are cytoplasmic.

The protein belongs to the TRAFAC class dynamin-like GTPase superfamily. GB1/RHD3 GTPase family. RHD3 subfamily.

It localises to the endoplasmic reticulum membrane. Its function is as follows. Cooperates with the reticulon proteins and tubule-shaping DP1 family proteins to generate and maintain the structure of the tubular endoplasmic reticulum network. Has GTPase activity, which is required for its function in ER organization. The polypeptide is Protein SEY1 (Clavispora lusitaniae (strain ATCC 42720) (Yeast)).